Here is a 278-residue protein sequence, read N- to C-terminus: Small ribosomal subunit protein uS3 (278 aa).

The region spanning 39 to 107 (LRKAIAKKYV…KVQLNIVEIS (69 aa)) is the KH type-2 domain. The segment at 244–278 (AKPKRVTKKAEAEASAEEKPKRAAKKAENITKEEE) is disordered. Over residues 251 to 278 (KKAEAEASAEEKPKRAAKKAENITKEEE) the composition is skewed to basic and acidic residues.

This sequence belongs to the universal ribosomal protein uS3 family. Part of the 30S ribosomal subunit. Forms a tight complex with proteins S10 and S14.

Functionally, binds the lower part of the 30S subunit head. Binds mRNA in the 70S ribosome, positioning it for translation. The chain is Small ribosomal subunit protein uS3 from Dehalococcoides mccartyi (strain ATCC BAA-2266 / KCTC 15142 / 195) (Dehalococcoides ethenogenes (strain 195)).